Reading from the N-terminus, the 105-residue chain is uncharacterized protein (105 aa).

Residues 64–84 form a helical membrane-spanning segment; it reads ILLISIFFLLLFALPQHTMGI.

Its subcellular location is the membrane. This is an uncharacterized protein from Saccharomyces cerevisiae (strain ATCC 204508 / S288c) (Baker's yeast).